Consider the following 449-residue polypeptide: UDP-N-acetylmuramoylalanine--D-glutamate ligase (449 aa).

118-124 contacts ATP; it reads GSNGKTT.

The protein belongs to the MurCDEF family.

The protein localises to the cytoplasm. It catalyses the reaction UDP-N-acetyl-alpha-D-muramoyl-L-alanine + D-glutamate + ATP = UDP-N-acetyl-alpha-D-muramoyl-L-alanyl-D-glutamate + ADP + phosphate + H(+). Its pathway is cell wall biogenesis; peptidoglycan biosynthesis. Cell wall formation. Catalyzes the addition of glutamate to the nucleotide precursor UDP-N-acetylmuramoyl-L-alanine (UMA). This is UDP-N-acetylmuramoylalanine--D-glutamate ligase from Oceanobacillus iheyensis (strain DSM 14371 / CIP 107618 / JCM 11309 / KCTC 3954 / HTE831).